A 232-amino-acid polypeptide reads, in one-letter code: Large ribosomal subunit protein uL1 (232 aa).

Belongs to the universal ribosomal protein uL1 family. In terms of assembly, part of the 50S ribosomal subunit.

Its function is as follows. Binds directly to 23S rRNA. The L1 stalk is quite mobile in the ribosome, and is involved in E site tRNA release. Protein L1 is also a translational repressor protein, it controls the translation of the L11 operon by binding to its mRNA. This chain is Large ribosomal subunit protein uL1, found in Bacteroides fragilis (strain ATCC 25285 / DSM 2151 / CCUG 4856 / JCM 11019 / LMG 10263 / NCTC 9343 / Onslow / VPI 2553 / EN-2).